Consider the following 335-residue polypeptide: Legumin type B (335 aa).

Disordered regions lie at residues 47–87 (PETQ…GNSV) and 102–155 (TEED…GRNG). Over residues 105–118 (DTAKRLRSPRDKRN) the composition is skewed to basic and acidic residues. Residues 135-144 (QQEEEEQEEE) are compositionally biased toward acidic residues. The 148-residue stretch at 167–314 (ENIAQPARAD…AFGLRQRQVT (148 aa)) folds into the Cupin type-1 domain.

Belongs to the 11S seed storage protein (globulins) family. Hexamer; each subunit is composed of an acidic and a basic chain derived from a single precursor and linked by a disulfide bond.

In terms of biological role, this protein found in the seeds of many leguminous and non-leguminous plants is the source of sulfur-containing amino acids in seed meals. This is Legumin type B (LEB7) from Vicia faba (Broad bean).